The primary structure comprises 496 residues: Probable cytosol aminopeptidase (496 aa).

Lysine 258 and aspartate 263 together coordinate Mn(2+). Lysine 270 is a catalytic residue. Residues aspartate 281, aspartate 340, and glutamate 342 each contribute to the Mn(2+) site. The active site involves arginine 344.

This sequence belongs to the peptidase M17 family. It depends on Mn(2+) as a cofactor.

It is found in the cytoplasm. The enzyme catalyses Release of an N-terminal amino acid, Xaa-|-Yaa-, in which Xaa is preferably Leu, but may be other amino acids including Pro although not Arg or Lys, and Yaa may be Pro. Amino acid amides and methyl esters are also readily hydrolyzed, but rates on arylamides are exceedingly low.. The catalysed reaction is Release of an N-terminal amino acid, preferentially leucine, but not glutamic or aspartic acids.. Presumably involved in the processing and regular turnover of intracellular proteins. Catalyzes the removal of unsubstituted N-terminal amino acids from various peptides. The protein is Probable cytosol aminopeptidase of Helicobacter pylori (strain Shi470).